A 120-amino-acid polypeptide reads, in one-letter code: Large ribosomal subunit protein uL18 (120 aa).

A disordered region spans residues 1–24 (MITKAAKNATRKKRHARVRAKLTG). The segment covering 9-20 (ATRKKRHARVRA) has biased composition (basic residues).

It belongs to the universal ribosomal protein uL18 family. As to quaternary structure, part of the 50S ribosomal subunit; part of the 5S rRNA/L5/L18/L25 subcomplex. Contacts the 5S and 23S rRNAs.

Its function is as follows. This is one of the proteins that bind and probably mediate the attachment of the 5S RNA into the large ribosomal subunit, where it forms part of the central protuberance. This chain is Large ribosomal subunit protein uL18, found in Bacillus mycoides (strain KBAB4) (Bacillus weihenstephanensis).